Reading from the N-terminus, the 240-residue chain is Ubiquinone biosynthesis O-methyltransferase (240 aa).

4 residues coordinate S-adenosyl-L-methionine: Arg44, Gly64, Asp85, and Met129.

It belongs to the methyltransferase superfamily. UbiG/COQ3 family.

It catalyses the reaction a 3-demethylubiquinol + S-adenosyl-L-methionine = a ubiquinol + S-adenosyl-L-homocysteine + H(+). The enzyme catalyses a 3-(all-trans-polyprenyl)benzene-1,2-diol + S-adenosyl-L-methionine = a 2-methoxy-6-(all-trans-polyprenyl)phenol + S-adenosyl-L-homocysteine + H(+). It functions in the pathway cofactor biosynthesis; ubiquinone biosynthesis. O-methyltransferase that catalyzes the 2 O-methylation steps in the ubiquinone biosynthetic pathway. The protein is Ubiquinone biosynthesis O-methyltransferase of Escherichia coli O6:K15:H31 (strain 536 / UPEC).